Consider the following 362-residue polypeptide: 3-dehydroquinate synthase (362 aa).

NAD(+) contacts are provided by residues 72 to 77 (SGEQAK), 106 to 110 (GVVGD), 130 to 131 (TT), Lys142, and Lys151. The Zn(2+) site is built by Glu184, His246, and His263.

The protein belongs to the sugar phosphate cyclases superfamily. Dehydroquinate synthase family. It depends on NAD(+) as a cofactor. Co(2+) serves as cofactor. The cofactor is Zn(2+).

Its subcellular location is the cytoplasm. It carries out the reaction 7-phospho-2-dehydro-3-deoxy-D-arabino-heptonate = 3-dehydroquinate + phosphate. The protein operates within metabolic intermediate biosynthesis; chorismate biosynthesis; chorismate from D-erythrose 4-phosphate and phosphoenolpyruvate: step 2/7. In terms of biological role, catalyzes the conversion of 3-deoxy-D-arabino-heptulosonate 7-phosphate (DAHP) to dehydroquinate (DHQ). The polypeptide is 3-dehydroquinate synthase (Bacillus subtilis (strain 168)).